The sequence spans 509 residues: UDP-N-acetylmuramoylalanine--D-glutamate ligase (509 aa).

116-122 lines the ATP pocket; the sequence is GTNGKST.

It belongs to the MurCDEF family.

The protein resides in the cytoplasm. It catalyses the reaction UDP-N-acetyl-alpha-D-muramoyl-L-alanine + D-glutamate + ATP = UDP-N-acetyl-alpha-D-muramoyl-L-alanyl-D-glutamate + ADP + phosphate + H(+). The protein operates within cell wall biogenesis; peptidoglycan biosynthesis. Functionally, cell wall formation. Catalyzes the addition of glutamate to the nucleotide precursor UDP-N-acetylmuramoyl-L-alanine (UMA). The polypeptide is UDP-N-acetylmuramoylalanine--D-glutamate ligase (Wolbachia pipientis wMel).